We begin with the raw amino-acid sequence, 888 residues long: Alanine--tRNA ligase (888 aa).

Residues H573, H577, C676, and H680 each coordinate Zn(2+).

It belongs to the class-II aminoacyl-tRNA synthetase family. Zn(2+) is required as a cofactor.

The protein resides in the cytoplasm. The enzyme catalyses tRNA(Ala) + L-alanine + ATP = L-alanyl-tRNA(Ala) + AMP + diphosphate. Functionally, catalyzes the attachment of alanine to tRNA(Ala) in a two-step reaction: alanine is first activated by ATP to form Ala-AMP and then transferred to the acceptor end of tRNA(Ala). Also edits incorrectly charged Ser-tRNA(Ala) and Gly-tRNA(Ala) via its editing domain. The chain is Alanine--tRNA ligase from Corynebacterium diphtheriae (strain ATCC 700971 / NCTC 13129 / Biotype gravis).